Consider the following 109-residue polypeptide: Ribonuclease P protein component 2 (109 aa).

Belongs to the eukaryotic/archaeal RNase P protein component 2 family. In terms of assembly, consists of a catalytic RNA component and at least 4-5 protein subunits.

The protein localises to the cytoplasm. It carries out the reaction Endonucleolytic cleavage of RNA, removing 5'-extranucleotides from tRNA precursor.. Its function is as follows. Part of ribonuclease P, a protein complex that generates mature tRNA molecules by cleaving their 5'-ends. This Archaeoglobus fulgidus (strain ATCC 49558 / DSM 4304 / JCM 9628 / NBRC 100126 / VC-16) protein is Ribonuclease P protein component 2.